The following is a 475-amino-acid chain: UDP-N-acetylmuramate--L-alanine ligase (475 aa).

118 to 124 contacts ATP; it reads GTHGKTT.

Belongs to the MurCDEF family.

The protein resides in the cytoplasm. The enzyme catalyses UDP-N-acetyl-alpha-D-muramate + L-alanine + ATP = UDP-N-acetyl-alpha-D-muramoyl-L-alanine + ADP + phosphate + H(+). It participates in cell wall biogenesis; peptidoglycan biosynthesis. Its function is as follows. Cell wall formation. The polypeptide is UDP-N-acetylmuramate--L-alanine ligase (Paracoccus denitrificans (strain Pd 1222)).